Reading from the N-terminus, the 483-residue chain is tRNA-2-methylthio-N(6)-dimethylallyladenosine synthase (483 aa).

The MTTase N-terminal domain occupies 31–148 (KKLYIETQGC…LPQMLDQHQD (118 aa)). Residues Cys40, Cys77, Cys111, Cys192, Cys196, and Cys199 each contribute to the [4Fe-4S] cluster site. Residues 178 to 410 (RVEGFKAFVS…QHWIKQSSIR (233 aa)) enclose the Radical SAM core domain. One can recognise a TRAM domain in the interval 413–477 (DAMQGTIQRV…LNLVYGELLN (65 aa)).

This sequence belongs to the methylthiotransferase family. MiaB subfamily. In terms of assembly, monomer. The cofactor is [4Fe-4S] cluster.

The protein resides in the cytoplasm. It carries out the reaction N(6)-dimethylallyladenosine(37) in tRNA + (sulfur carrier)-SH + AH2 + 2 S-adenosyl-L-methionine = 2-methylsulfanyl-N(6)-dimethylallyladenosine(37) in tRNA + (sulfur carrier)-H + 5'-deoxyadenosine + L-methionine + A + S-adenosyl-L-homocysteine + 2 H(+). Functionally, catalyzes the methylthiolation of N6-(dimethylallyl)adenosine (i(6)A), leading to the formation of 2-methylthio-N6-(dimethylallyl)adenosine (ms(2)i(6)A) at position 37 in tRNAs that read codons beginning with uridine. In Acinetobacter baylyi (strain ATCC 33305 / BD413 / ADP1), this protein is tRNA-2-methylthio-N(6)-dimethylallyladenosine synthase.